We begin with the raw amino-acid sequence, 333 residues long: uncharacterized protein (333 aa).

This is an uncharacterized protein from Escherichia coli (Bacteriophage T4).